The primary structure comprises 478 residues: Proline--tRNA ligase (478 aa).

Belongs to the class-II aminoacyl-tRNA synthetase family. ProS type 3 subfamily. In terms of assembly, homodimer.

It localises to the cytoplasm. It carries out the reaction tRNA(Pro) + L-proline + ATP = L-prolyl-tRNA(Pro) + AMP + diphosphate. Catalyzes the attachment of proline to tRNA(Pro) in a two-step reaction: proline is first activated by ATP to form Pro-AMP and then transferred to the acceptor end of tRNA(Pro). The protein is Proline--tRNA ligase of Methanothrix thermoacetophila (strain DSM 6194 / JCM 14653 / NBRC 101360 / PT) (Methanosaeta thermophila).